The primary structure comprises 447 residues: Dirigent protein 10 (447 aa).

Residues 1–21 (MAGQKILSLLVIALVVTFAAA) form the signal peptide. A compositionally biased stretch (gly residues) spans 74 to 85 (SGSTGSGLGAGT). The interval 74 to 123 (SGSTGSGLGAGTGSIPSSGSGPGLLPTASSVPGSLAGGGSGSLPTTGSAT) is disordered. A compositionally biased stretch (low complexity) spans 86-107 (GSIPSSGSGPGLLPTASSVPGS).

The protein belongs to the plant dirigent protein family. As to quaternary structure, homodimer. As to expression, in roots, mostly detected in root endodermis and quiescent center, and, to a lower extent, in root stele and cortex. Expressed in root vascular cylinder, flowers, siliques, cotyledon and leaf veins, and leaf margins. Present in the basal region of rosette leaf trichomes and in developing xylem.

It is found in the secreted. The protein resides in the extracellular space. It localises to the apoplast. Dirigent proteins impart stereoselectivity on the phenoxy radical-coupling reaction, yielding optically active lignans from two molecules of coniferyl alcohol in the biosynthesis of lignans, flavonolignans, and alkaloids and thus plays a central role in plant secondary metabolism. Regulates suberin accumulation in roots. This Arabidopsis thaliana (Mouse-ear cress) protein is Dirigent protein 10 (DIR10).